We begin with the raw amino-acid sequence, 251 residues long: tRNA pseudouridine synthase A (251 aa).

The active-site Nucleophile is aspartate 52. Position 113 (tyrosine 113) interacts with substrate.

It belongs to the tRNA pseudouridine synthase TruA family. Homodimer.

It carries out the reaction uridine(38/39/40) in tRNA = pseudouridine(38/39/40) in tRNA. Functionally, formation of pseudouridine at positions 38, 39 and 40 in the anticodon stem and loop of transfer RNAs. The chain is tRNA pseudouridine synthase A from Brucella abortus (strain 2308).